The primary structure comprises 495 residues: Probable cytochrome P450 4s3 (495 aa).

Residues E307 and C436 each contribute to the heme site.

It belongs to the cytochrome P450 family. Requires heme as cofactor.

Its subcellular location is the endoplasmic reticulum membrane. The protein resides in the microsome membrane. In terms of biological role, may be involved in the metabolism of insect hormones and in the breakdown of synthetic insecticides. The protein is Probable cytochrome P450 4s3 (Cyp4s3) of Drosophila melanogaster (Fruit fly).